We begin with the raw amino-acid sequence, 201 residues long: IDLSRF-like peptide (201 aa).

The N-terminal stretch at 1–28 is a signal peptide; sequence MVRRFCNGAVALGIALTACAAFPRAIMA. The propeptide occupies 43 to 201; the sequence is SDACHPYEPF…EKLVKTGFLD (159 aa). The LDL-receptor class A domain maps to 45–85; sequence ACHPYEPFKCPGDGLCISIQYLCDGAPDCQDGYDEDSRLCT. 3 cysteine pairs are disulfide-bonded: C46-C60, C54-C73, and C67-C84.

In terms of tissue distribution, expressed in central brain, antennal and optical lobes, in gnathal, thoracic and abdominal ganglia and in the retrocerebral complex (at protein level).

The protein localises to the secreted. The chain is IDLSRF-like peptide from Camponotus floridanus (Florida carpenter ant).